Reading from the N-terminus, the 182-residue chain is Late embryogenesis abundant protein 3 (182 aa).

Residues 1 to 51 (MAQHQHSPQRPRDQDNTRPHDQYGIVFSVSGDDVARKQGDSFSQPDPTVAT) form a disordered region. Positions 7-11 (SPQRP) match the Nuclear localization signal (NLS) motif. Over residues 10 to 21 (RPRDQDNTRPHD) the composition is skewed to basic and acidic residues. SMP domains lie at 58 to 115 (VTIG…TNEQ) and 123 to 181 (VNIA…LNQQ). The interval 145-182 (EDAEAVVGAELRSSSEMKTTPGGVADSMSAGARLNQQL) is disordered.

The protein belongs to the LEA type SMP family.

It localises to the cytoplasm. The protein localises to the nucleus. Its function is as follows. LEA proteins are late embryonic proteins abundant in higher plant seed embryos. The function of those proteins is not known. In Arabidopsis thaliana (Mouse-ear cress), this protein is Late embryogenesis abundant protein 3.